The following is a 1930-amino-acid chain: Transport and Golgi organization protein 1 homolog (1930 aa).

The first 24 residues, 1 to 24 (MAAAPGLLFWLFVLGALWWVPGQS), serve as a signal peptide directing secretion. The Lumenal portion of the chain corresponds to 25–1171 (DLSHGRRFSD…EPAAVPPLES (1147 aa)). In terms of domain architecture, SH3 spans 45–107 (MLMYRGKALE…PKDLIKVLHK (63 aa)). 5 disordered regions span residues 144-263 (LELE…REKT), 317-496 (EEEE…AAEK), 547-737 (LGSS…MNSQ), 754-891 (TKQP…TPEI), and 1018-1149 (TAPL…PVGA). The span at 152–189 (EESKKAEEVSQHREKSPEESRGRELDPVPEPEAFRADS) shows a compositional bias: basic and acidic residues. Positions 197–211 (SESTEGLQGQPSAQE) are enriched in polar residues. At serine 229 the chain carries Phosphoserine. Residues 247–256 (ESRTGNSSPA) show a composition bias toward polar residues. Over residues 317–330 (EEEEEVEEDADSSD) the composition is skewed to acidic residues. Basic and acidic residues predominate over residues 338–368 (SDKDEKVPGKPMIEKYLTDKDPNLSEEDKVE). A glycan (N-linked (GlcNAc...) asparagine) is linked at asparagine 360. Positions 420–430 (DSEDEGDDLFV) are enriched in acidic residues. 2 stretches are compositionally biased toward basic and acidic residues: residues 431 to 442 (EEPKTNDVKDSE) and 451 to 461 (GEEKDIQESRK). Asparagine 631 is a glycosylation site (N-linked (GlcNAc...) asparagine). A compositionally biased stretch (basic and acidic residues) spans 661–677 (EDGTDAEQARAIRRPQE). A compositionally biased stretch (acidic residues) spans 692–701 (DEEEEEEEGD). The segment covering 715–726 (VSAQQSRENSPS) has biased composition (polar residues). Residues 791–800 (EESHLADMRA) show a composition bias toward basic and acidic residues. Residue serine 856 is modified to Phosphoserine. Residues 1030–1039 (GWARPGEERQ) show a composition bias toward basic and acidic residues. Polar residues-rich tracts occupy residues 1040 to 1054 (PPQQ…TGDL) and 1115 to 1127 (QPVT…SEVS). Positions 1128–1137 (QKPDTKKDID) are enriched in basic and acidic residues. Residues 1172–1192 (AFGSLYAFILYLSKMLLATLP) lie within the membrane without spanning it. At 1193–1202 (DNVQPGPDFY) the chain is on the lumenal side. A helical transmembrane segment spans residues 1203 to 1223 (GLPWQPVIITAVLGIVSFAIF). Topologically, residues 1224 to 1930 (SWRTILVVKS…DRSQASKPTP (707 aa)) are cytoplasmic. 2 coiled-coil regions span residues 1236–1329 (YQVT…KNQD) and 1359–1422 (LNEA…EIAL). Residues 1238 to 1677 (VTEKQISEKL…VIVKPMPGRP (440 aa)) form a mediates interaction with MIA2 region. Positions 1447-1472 (ESEDPDKGGNESDDLANGETGGDRSE) are disordered. The residue at position 1458 (serine 1458) is a Phosphoserine. The stretch at 1514–1662 (NLEDQIKKLE…LLEMTQKMAM (149 aa)) forms a coiled coil. Disordered stretches follow at residues 1669-1796 (IVKP…VPLM), 1801-1820 (PPPI…FGPR), and 1840-1930 (APGV…KPTP). Residues 1677 to 1694 (PNTQNPPRRGLLSQNGSF) are compositionally biased toward polar residues. Phosphoserine is present on residues serine 1693 and serine 1705. Residues 1706–1715 (PPLPAEPPGR) are compositionally biased toward pro residues. The segment covering 1722–1738 (SRRDTPRSEFGSLDRHL) has biased composition (basic and acidic residues). Residues serine 1733, serine 1754, serine 1766, and serine 1770 each carry the phosphoserine modification. Positions 1760–1773 (PVVNSSSRSSSPAK) are enriched in low complexity. The tract at residues 1776–1930 (DEGKVNMAPK…DRSQASKPTP (155 aa)) is proline-rich domain (PRD); mediates interaction with the COPII coat subunits SEC23A and SEC23B. A compositionally biased stretch (pro residues) spans 1801–1811 (PPPIRYGPPPQ). At arginine 1805 the chain carries Asymmetric dimethylarginine. Residues 1809–1869 (PPQLCGGPFG…GHTPFRPPGS (61 aa)) are SEC16A-interacting region (SIR); required for its localization to endoplasmic reticulum exit sites and for its interaction with SEC16A. Positions 1846–1858 (GKRDLPLDPREFL) are enriched in basic and acidic residues. Residues 1881–1898 (RLPPPTHGPQEYPPPPPA) are compositionally biased toward pro residues. Serine 1915 is modified (phosphoserine). The span at 1915-1930 (SPSSVQDRSQASKPTP) shows a compositional bias: polar residues.

The protein belongs to the MIA/OTOR family. Tango1 subfamily. Interacts with MIA2. Interacts (via SH3 domain) with COL7A1. Interacts with the COPII coat subunits SEC23A, SEC23B and maybe SEC24C. May interact with APOB and MIA2. Interacts with SEC16A.

Its subcellular location is the endoplasmic reticulum membrane. Plays a role in the transport of cargos that are too large to fit into COPII-coated vesicles and require specific mechanisms to be incorporated into membrane-bound carriers and exported from the endoplasmic reticulum. This protein is required for collagen VII (COL7A1) secretion by loading COL7A1 into transport carriers. It may participate in cargo loading of COL7A1 at endoplasmic reticulum exit sites by binding to COPII coat subunits Sec23/24 and guiding SH3-bound COL7A1 into a growing carrier. Does not play a role in global protein secretion and is apparently specific to COL7A1 cargo loading. However, it may participate in secretion of other proteins in cells that do not secrete COL7A1. It is also specifically required for the secretion of lipoproteins by participating in their export from the endoplasmic reticulum. Required for correct assembly of COPII coat components at endoplasmic reticulum exit sites (ERES) and for the localization of SEC16A and membrane-bound ER-resident complexes consisting of MIA2 and PREB/SEC12 to ERES. The polypeptide is Transport and Golgi organization protein 1 homolog (Mus musculus (Mouse)).